We begin with the raw amino-acid sequence, 200 residues long: MEVIKAEFIKSAVKPKDYPLETLPEVAFVGRSNVGKSSLINVLANRKSLVRTSSTPGRTQLINFFDINGVLTLVDLPGYGYAKAPPDVRKQWGPMIETYLARRGNLRAVVLILDIRRIPSDGDLQMLGWLETYDIPPIFVLTKCDKLSKVERAKQTALIASAIKRDRNELLHFSALSRDGRDAVWKEVLRLTLAQEEERI.

In terms of domain architecture, EngB-type G spans Thr22 to Ala194. Residues Gly30 to Ser37, Gly57 to Leu61, Asp75 to Gly78, Thr142 to Asp145, and Phe173 to Ala175 each bind GTP. Mg(2+)-binding residues include Ser37 and Thr59.

The protein belongs to the TRAFAC class TrmE-Era-EngA-EngB-Septin-like GTPase superfamily. EngB GTPase family. Mg(2+) serves as cofactor.

In terms of biological role, necessary for normal cell division and for the maintenance of normal septation. The protein is Probable GTP-binding protein EngB of Pelobacter propionicus (strain DSM 2379 / NBRC 103807 / OttBd1).